Here is a 915-residue protein sequence, read N- to C-terminus: Bifunctional uridylyltransferase/uridylyl-removing enzyme (915 aa).

A uridylyltransferase region spans residues methionine 1–proline 360. The interval isoleucine 361–valine 731 is uridylyl-removing. One can recognise an HD domain in the interval valine 478 to valine 594. 2 ACT domains span residues glutamine 732–arginine 817 and isoleucine 840–isoleucine 915.

It belongs to the GlnD family. The cofactor is Mg(2+).

The enzyme catalyses [protein-PII]-L-tyrosine + UTP = [protein-PII]-uridylyl-L-tyrosine + diphosphate. It carries out the reaction [protein-PII]-uridylyl-L-tyrosine + H2O = [protein-PII]-L-tyrosine + UMP + H(+). Its activity is regulated as follows. Uridylyltransferase (UTase) activity is inhibited by glutamine, while glutamine activates uridylyl-removing (UR) activity. In terms of biological role, modifies, by uridylylation and deuridylylation, the PII regulatory proteins (GlnB and homologs), in response to the nitrogen status of the cell that GlnD senses through the glutamine level. Under low glutamine levels, catalyzes the conversion of the PII proteins and UTP to PII-UMP and PPi, while under higher glutamine levels, GlnD hydrolyzes PII-UMP to PII and UMP (deuridylylation). Thus, controls uridylylation state and activity of the PII proteins, and plays an important role in the regulation of nitrogen assimilation and metabolism. This Psychrobacter arcticus (strain DSM 17307 / VKM B-2377 / 273-4) protein is Bifunctional uridylyltransferase/uridylyl-removing enzyme.